A 621-amino-acid chain; its full sequence is Probable serine/threonine-protein kinase WNK2 (621 aa).

One can recognise a Protein kinase domain in the interval 28–286; the sequence is GRYTEVLGKG…AQELLMDPFL (259 aa). ATP-binding positions include 108–111 and Lys-158; that span reads TEVF. Residue Asp-175 is the Proton acceptor of the active site. Disordered regions lie at residues 438 to 490, 501 to 520, 527 to 553, and 600 to 621; these read SVEN…SDSP, VEPHIGGNMPNGILKKNDTD, GTSVDLPNPSMIDRKSGVASVSTSPQS, and HREETLTRCRLKADERNRSDKP.

The protein belongs to the protein kinase superfamily. Ser/Thr protein kinase family. WNK subfamily.

The enzyme catalyses L-seryl-[protein] + ATP = O-phospho-L-seryl-[protein] + ADP + H(+). It catalyses the reaction L-threonyl-[protein] + ATP = O-phospho-L-threonyl-[protein] + ADP + H(+). The polypeptide is Probable serine/threonine-protein kinase WNK2 (WNK2) (Oryza sativa subsp. japonica (Rice)).